Reading from the N-terminus, the 119-residue chain is Large ribosomal subunit protein uL18 (119 aa).

It belongs to the universal ribosomal protein uL18 family. As to quaternary structure, part of the 50S ribosomal subunit; part of the 5S rRNA/L5/L18/L25 subcomplex. Contacts the 5S and 23S rRNAs.

In terms of biological role, this is one of the proteins that bind and probably mediate the attachment of the 5S RNA into the large ribosomal subunit, where it forms part of the central protuberance. The polypeptide is Large ribosomal subunit protein uL18 (Cereibacter sphaeroides (strain ATCC 17025 / ATH 2.4.3) (Rhodobacter sphaeroides)).